A 502-amino-acid polypeptide reads, in one-letter code: Probable malate:quinone oxidoreductase (502 aa).

This sequence belongs to the MQO family. FAD is required as a cofactor.

The catalysed reaction is (S)-malate + a quinone = a quinol + oxaloacetate. Its pathway is carbohydrate metabolism; tricarboxylic acid cycle; oxaloacetate from (S)-malate (quinone route): step 1/1. The protein is Probable malate:quinone oxidoreductase of Synechococcus sp. (strain CC9902).